A 248-amino-acid polypeptide reads, in one-letter code: Isopentenyl phosphate kinase (248 aa).

7-11 (KLGGS) contributes to the ATP binding site. Position 49 (glycine 49) interacts with substrate. ATP is bound at residue glycine 50. The substrate site is built by histidine 54 and glycine 152. The ATP site is built by glycine 209 and lysine 213.

This sequence belongs to the isopentenyl phosphate kinase family. Homodimer.

The enzyme catalyses isopentenyl phosphate + ATP = isopentenyl diphosphate + ADP. Catalyzes the phosphorylation of isopentenyl phosphate (IP) to isopentenyl diphosphate (IPP). Functions in an alternate mevalonate (MVA) pathway leading to IPP, a key precursor for the biosynthesis of isoprenoid compounds such as archaeal membrane lipids. This is Isopentenyl phosphate kinase from Haloferax volcanii (strain ATCC 29605 / DSM 3757 / JCM 8879 / NBRC 14742 / NCIMB 2012 / VKM B-1768 / DS2) (Halobacterium volcanii).